Consider the following 78-residue polypeptide: Large ribosomal subunit protein bL31 (78 aa).

Belongs to the bacterial ribosomal protein bL31 family. Type A subfamily. Part of the 50S ribosomal subunit.

Its function is as follows. Binds the 23S rRNA. In Rickettsia felis (strain ATCC VR-1525 / URRWXCal2) (Rickettsia azadi), this protein is Large ribosomal subunit protein bL31 (rpmE).